Here is a 45-residue protein sequence, read N- to C-terminus: Natriuretic peptide OsNP-d (45 aa).

A propeptide spanning residues P1–L5 is cleaved from the precursor. A disulfide bridge links C14 with C30.

The protein belongs to the natriuretic peptide family. As to expression, expressed by the venom gland.

The protein resides in the secreted. Its function is as follows. Snake venom natriuretic peptide that targets both NPR1 and NPR2. Exhibits hypotensive and vasodepressor activities. This is Natriuretic peptide OsNP-d from Oxyuranus scutellatus scutellatus (Australian taipan).